The primary structure comprises 128 residues: Large ribosomal subunit protein bL12 (128 aa).

It belongs to the bacterial ribosomal protein bL12 family. In terms of assembly, homodimer. Part of the ribosomal stalk of the 50S ribosomal subunit. Forms a multimeric L10(L12)X complex, where L10 forms an elongated spine to which 2 to 4 L12 dimers bind in a sequential fashion. Binds GTP-bound translation factors.

Its function is as follows. Forms part of the ribosomal stalk which helps the ribosome interact with GTP-bound translation factors. Is thus essential for accurate translation. The protein is Large ribosomal subunit protein bL12 of Corynebacterium glutamicum (strain R).